Consider the following 447-residue polypeptide: 2-oxoadipate dioxygenase/decarboxylase (447 aa).

3 residues coordinate 2-oxoadipate: H68, R72, and H224. Position 68 (H68) interacts with Fe(2+). Fe(2+) is bound by residues H224 and E290. V391 contacts 2-oxoadipate.

It belongs to the 2-oxoadipate dioxygenase/decarboxylase family. It depends on Fe(2+) as a cofactor.

The catalysed reaction is 2-oxoadipate + O2 = (R)-2-hydroxyglutarate + CO2. Its function is as follows. Catalyzes the decarboxylation and hydroxylation of 2-oxoadipate (2OA) to form D-2-hydroxyglutarate (D-2-HGA). The protein is 2-oxoadipate dioxygenase/decarboxylase (ydcJ) of Escherichia coli (strain K12).